The primary structure comprises 676 residues: RNA helicase NPH-II (676 aa).

The 176-residue stretch at 172-347 (FSAWISHRPV…VFLPNPAFIH (176 aa)) folds into the Helicase ATP-binding domain. Position 185–192 (185–192 (GGTGVGKT)) interacts with ATP. The DEXH box motif lies at 296–299 (DEVH). In terms of domain architecture, Helicase C-terminal spans 366 to 535 (NPSSRMAYIE…NYILYANKFN (170 aa)).

This sequence belongs to the DEAD box helicase family. DEAH subfamily. Monomer.

Its subcellular location is the virion. The catalysed reaction is ATP + H2O = ADP + phosphate + H(+). Its function is as follows. NTP-dependent helicase that catalyzes unidirectional unwinding of 3'tailed duplex RNAs and plays an important role during transcription of early mRNAs, presumably by preventing R-loop formation behind the elongating RNA polymerase. Might also play a role in the export of newly synthesized mRNA chains out of the core into the cytoplasm. Required for replication and propagation of viral particles. This Bos taurus (Bovine) protein is RNA helicase NPH-II (OPG084).